Reading from the N-terminus, the 561-residue chain is Thymidine kinase (561 aa).

2 stretches are compositionally biased toward polar residues: residues 1–14 (MASN…TPRR) and 112–122 (LSSSNTASGLR). 2 disordered regions span residues 1-22 (MASN…VPKA) and 34-122 (FLTQ…SGLR). 245–252 (GCMAAGKT) serves as a coordination point for ATP. Glutamate 272 acts as the Proton acceptor in catalysis. Glutamine 310 provides a ligand contact to substrate. Position 400 (arginine 400) interacts with ATP. A substrate-binding site is contributed by arginine 406.

It belongs to the herpesviridae thymidine kinase family. Homodimer.

The catalysed reaction is thymidine + ATP = dTMP + ADP + H(+). Functionally, catalyzes the transfer of the gamma-phospho group of ATP to thymidine to generate dTMP in the salvage pathway of pyrimidine synthesis. The dTMP serves as a substrate for DNA polymerase during viral DNA replication. Allows the virus to be reactivated and to grow in non-proliferative cells lacking a high concentration of phosphorylated nucleic acid precursors. This Connochaetes taurinus (Blue wildebeest) protein is Thymidine kinase.